A 781-amino-acid chain; its full sequence is Chloride channel protein CLC-f (781 aa).

Disordered regions lie at residues 1 to 41 (MSSG…QSPA) and 79 to 98 (RERH…EEDG). Positions 10–20 (NEDRHLLRSTD) are enriched in basic and acidic residues. The next 12 membrane-spanning stretches (helical) occupy residues 129 to 149 (WALL…VAGF), 184 to 204 (ILLI…LLEI), 221 to 241 (FLAG…LGTG), 250 to 270 (SVDI…NNRE), 279 to 299 (GAAS…FFAI), 314 to 334 (FTTA…NALL), 350 to 370 (AAEL…SVVF), 388 to 408 (FGLP…IIAL), 433 to 453 (APGI…TALC), 457 to 477 (GLVG…GAVF), 502 to 522 (ALVG…TSVL), and 523 to 543 (LLFE…AVGL). The disordered stretch occupies residues 553–584 (QGKESDSSEGRSTGRGYSSLSPSERKTEGVWR). Over residues 575–584 (SERKTEGVWR) the composition is skewed to basic and acidic residues. 2 CBS domains span residues 621 to 677 (MSKN…NAST) and 699 to 763 (QERG…EMSR). A helical transmembrane segment spans residues 726-746 (QLPVVKRGEVIHKGKRRKLLG).

The protein belongs to the chloride channel (TC 2.A.49) family. Homodimer.

The protein resides in the membrane. In terms of biological role, voltage-gated chloride channel. The protein is Chloride channel protein CLC-f (CLC-F) of Arabidopsis thaliana (Mouse-ear cress).